Here is a 751-residue protein sequence, read N- to C-terminus: Catalase-peroxidase (751 aa).

Residues methionine 1–arginine 24 are disordered. The segment at residues tryptophan 95–tyrosine 241 is a cross-link (tryptophyl-tyrosyl-methioninium (Trp-Tyr) (with M-267)). Catalysis depends on histidine 96, which acts as the Proton acceptor. Residues tyrosine 241–methionine 267 constitute a cross-link (tryptophyl-tyrosyl-methioninium (Tyr-Met) (with W-95)). Histidine 282 provides a ligand contact to heme b.

Belongs to the peroxidase family. Peroxidase/catalase subfamily. Homodimer or homotetramer. Heme b is required as a cofactor. Formation of the three residue Trp-Tyr-Met cross-link is important for the catalase, but not the peroxidase activity of the enzyme.

The protein localises to the cytoplasm. The catalysed reaction is H2O2 + AH2 = A + 2 H2O. It carries out the reaction 2 H2O2 = O2 + 2 H2O. Functionally, bifunctional enzyme with both catalase and broad-spectrum peroxidase activity. This Aspergillus oryzae (strain ATCC 42149 / RIB 40) (Yellow koji mold) protein is Catalase-peroxidase.